Reading from the N-terminus, the 502-residue chain is Maturase K (502 aa).

It belongs to the intron maturase 2 family. MatK subfamily.

The protein resides in the plastid. It is found in the chloroplast. In terms of biological role, usually encoded in the trnK tRNA gene intron. Probably assists in splicing its own and other chloroplast group II introns. The protein is Maturase K of Brassica oleracea (Wild cabbage).